A 126-amino-acid polypeptide reads, in one-letter code: Large ribosomal subunit protein bL12 (126 aa).

It belongs to the bacterial ribosomal protein bL12 family. Homodimer. Part of the ribosomal stalk of the 50S ribosomal subunit. Forms a multimeric L10(L12)X complex, where L10 forms an elongated spine to which 2 to 4 L12 dimers bind in a sequential fashion. Binds GTP-bound translation factors.

Its function is as follows. Forms part of the ribosomal stalk which helps the ribosome interact with GTP-bound translation factors. Is thus essential for accurate translation. This Caulobacter sp. (strain K31) protein is Large ribosomal subunit protein bL12.